Here is a 312-residue protein sequence, read N- to C-terminus: tRNA dimethylallyltransferase (312 aa).

17-24 contacts ATP; sequence GPTASGKT. 19–24 serves as a coordination point for substrate; that stretch reads TASGKT. 3 interaction with substrate tRNA regions span residues 42–45, 166–170, and 247–252; these read DSAL, QRLLR, and RCVGYR.

This sequence belongs to the IPP transferase family. In terms of assembly, monomer. The cofactor is Mg(2+).

It catalyses the reaction adenosine(37) in tRNA + dimethylallyl diphosphate = N(6)-dimethylallyladenosine(37) in tRNA + diphosphate. Its function is as follows. Catalyzes the transfer of a dimethylallyl group onto the adenine at position 37 in tRNAs that read codons beginning with uridine, leading to the formation of N6-(dimethylallyl)adenosine (i(6)A). The sequence is that of tRNA dimethylallyltransferase from Sodalis glossinidius (strain morsitans).